The following is a 431-amino-acid chain: MASTRSNARLIRFGIFALVLIGCGYILTRGSSFQPPNYQQTQSPAAHEKQTGNVAAGGGAGSGSAGAQVPLGKNRGPIPKAIMGAGEGGSDAPVPQQDIPDSYTLNDKIKATFVTLARNSDLYSLAESIRHVEDRFNKKFHYDWVFLNDEEFNDEFKETVGSLVSGNTKFGLIPKEHWSYPPWIDQEKAALVREQMREKKIIYGHSESYRHMCRFESGFFWRQEILNDYDYYWRVEPDIKLYCDIDYDIFKWMKDNNKDYAFTISLPEYKETIPTLWDTTKEFIEKNPQYLAQNNLMDWVSDDKGQTYNGCHFWSNFEIGSLAFWRSEAYRKYFEHLDKAGGFFYERWGDAPVHSIAAALFLPREKIHFFEDVGYYHVPFTNCPVDKEVRKARNCNCDPNKDFTWRGYSCTTKYYTLNNFKRQKGWEKYTA.

The Cytoplasmic segment spans residues 1-9 (MASTRSNAR). A helical; Signal-anchor for type II membrane protein transmembrane segment spans residues 10–28 (LIRFGIFALVLIGCGYILT). Residues 29–431 (RGSSFQPPNY…RQKGWEKYTA (403 aa)) are Lumenal-facing. Residues 35–44 (PPNYQQTQSP) are compositionally biased toward polar residues. Residues 35 to 73 (PPNYQQTQSPAAHEKQTGNVAAGGGAGSGSAGAQVPLGK) form a disordered region. Positions 55 to 64 (AAGGGAGSGS) are enriched in gly residues. Catalysis depends on E318, which acts as the Nucleophile.

This sequence belongs to the glycosyltransferase 15 family.

It localises to the golgi apparatus membrane. Its pathway is protein modification; protein glycosylation. Its function is as follows. Involved in O-glycosylation of cell wall and secreted proteins. Transfers an alpha-D-mannosyl residue from GDP-mannose into lipid-linked oligosaccharide, forming an alpha-(1-&gt;2)-D-mannosyl-D-mannose linkage. Mainly responsible for the addition of the second mannose residue in an O-linked mannose pentamer. Can also substitute for MNT2 by adding the third mannose residue. Important for adherence to host surfaces and for virulence. This is Glycolipid 2-alpha-mannosyltransferase 1 (MNT1) from Candida albicans (strain SC5314 / ATCC MYA-2876) (Yeast).